A 967-amino-acid chain; its full sequence is E3 ubiquitin-protein ligase arkadia-C (967 aa).

Disordered regions lie at residues 57 to 175 (QQID…VSSL) and 193 to 276 (RKRF…SGGM). Low complexity predominate over residues 112 to 131 (SSFSDCISSPSSSSHFGDSD). The span at 149 to 160 (GINSTPRTQSAR) shows a compositional bias: polar residues. A compositionally biased stretch (low complexity) spans 232 to 251 (SSSSSSENDLSSESSSSSST). Residues 280–284 (VVVIE) carry the SUMO interaction motif 1 (SIM) motif. Residues 305-311 (EVEIVTV) carry the SUMO interaction motif 2 (SIM) motif. Positions 321 to 343 (LGHPRSHWGQNSQSGRTQEHRTR) are disordered. The SUMO interaction motif 3 (SIM) signature appears at 360-364 (VVDLT). Disordered stretches follow at residues 368-452 (DDPT…MPRL), 482-548 (HSHH…LSNN), 629-657 (LHHQ…MDYV), and 669-689 (PSLT…LSTA). Residues 385-395 (VSTVSSNTSTS) are compositionally biased toward low complexity. The span at 482–498 (HSHHFPHHHHHHHHHSS) shows a compositional bias: basic residues. Residues 629 to 642 (LHHQTSACPHSNPA) show a composition bias toward polar residues. Positions 643 to 654 (SQPPPPPPPPPM) are enriched in pro residues. A ubiquitin binding region spans residues 880-882 (YPH). Zn(2+) is bound by residues Cys-915 and Cys-918. The RING-type; atypical zinc-finger motif lies at 915-956 (CTICLSILEEGEDVRRLPCMHLFHQVCVDQWLITNKKCPICR). The segment at 930–934 (RLPCM) is ubiquitin binding. His-938 and Cys-941 together coordinate Zn(2+).

Belongs to the Arkadia family. In terms of assembly, monomer.

The protein resides in the nucleus. The protein localises to the cytoplasm. Its subcellular location is the PML body. It catalyses the reaction S-ubiquitinyl-[E2 ubiquitin-conjugating enzyme]-L-cysteine + [acceptor protein]-L-lysine = [E2 ubiquitin-conjugating enzyme]-L-cysteine + N(6)-ubiquitinyl-[acceptor protein]-L-lysine.. The protein operates within protein modification; protein ubiquitination. Its activity is regulated as follows. Binds free ubiquitin non-covalently via its RING-type zinc finger. Ubiquitin-binding leads to enhance the E3 ubiquitin-protein ligase activity by stabilizing the ubiquitin-conjugating enzyme E2 (donor ubiquitin) in the 'closed' conformation and activating ubiquitin transfer. Functionally, E3 ubiquitin-protein ligase required for mesoderm patterning during embryonic development. Acts as an enhancer of the transcriptional responses of the smad2/smad3 effectors, which are activated downstream of BMP. Acts by mediating ubiquitination and degradation of SMAD inhibitors such as smad7, inducing their proteasomal degradation and thereby enhancing the transcriptional activity of TGF-beta and BMP. Specifically binds polysumoylated chains via SUMO interaction motifs (SIMs) and mediates ubiquitination of sumoylated substrates. The regulation of the BMP-SMAD signaling is however independent of sumoylation and is not dependent of SUMO interaction motifs (SIMs). This is E3 ubiquitin-protein ligase arkadia-C (rnf111-c) from Xenopus laevis (African clawed frog).